A 339-amino-acid polypeptide reads, in one-letter code: DNA-directed RNA polymerase subunit alpha (339 aa).

An alpha N-terminal domain (alpha-NTD) region spans residues 1 to 235; it reads MVIQKNWQEL…DQLQVFVNFE (235 aa). Residues 251 to 339 are alpha C-terminal domain (alpha-CTD); that stretch reads FNPALLKKVD…DLAKRFEEHY (89 aa).

This sequence belongs to the RNA polymerase alpha chain family. Homodimer. The RNAP catalytic core consists of 2 alpha, 1 beta, 1 beta' and 1 omega subunit. When a sigma factor is associated with the core the holoenzyme is formed, which can initiate transcription.

It carries out the reaction RNA(n) + a ribonucleoside 5'-triphosphate = RNA(n+1) + diphosphate. Its function is as follows. DNA-dependent RNA polymerase catalyzes the transcription of DNA into RNA using the four ribonucleoside triphosphates as substrates. In Methylobacterium radiotolerans (strain ATCC 27329 / DSM 1819 / JCM 2831 / NBRC 15690 / NCIMB 10815 / 0-1), this protein is DNA-directed RNA polymerase subunit alpha.